A 355-amino-acid chain; its full sequence is Probable poly-beta-1,6-N-acetyl-D-glucosamine export protein (355 aa).

10 helical membrane passes run 13–30, 45–67, 74–96, 116–138, 145–167, 187–204, 211–233, 243–262, 269–291, and 306–328; these read AFIC…QITL, YIRN…LTTL, INYL…LFYS, VLGQ…SYII, LFNS…HYFL, MILG…IGYN, FLEK…FIAV, SFTY…LLGV, MLLN…HPII, and TIVF…GMML.

The protein belongs to the acyltransferase 3 family.

The protein resides in the cell membrane. Presumably involved in the export of the biofilm adhesin polysaccharide poly-beta-1,6-N-acetyl-D-glucosamine (PNAG, also referred to as PIA) across the cell membrane. The chain is Probable poly-beta-1,6-N-acetyl-D-glucosamine export protein (icaC) from Staphylococcus epidermidis.